Here is a 354-residue protein sequence, read N- to C-terminus: UDP-N-acetylglucosamine--N-acetylmuramyl-(pentapeptide) pyrophosphoryl-undecaprenol N-acetylglucosamine transferase (354 aa).

UDP-N-acetyl-alpha-D-glucosamine is bound by residues S196 and Q288.

This sequence belongs to the glycosyltransferase 28 family. MurG subfamily.

Its subcellular location is the cell membrane. The enzyme catalyses Mur2Ac(oyl-L-Ala-gamma-D-Glu-L-Lys-D-Ala-D-Ala)-di-trans,octa-cis-undecaprenyl diphosphate + UDP-N-acetyl-alpha-D-glucosamine = beta-D-GlcNAc-(1-&gt;4)-Mur2Ac(oyl-L-Ala-gamma-D-Glu-L-Lys-D-Ala-D-Ala)-di-trans,octa-cis-undecaprenyl diphosphate + UDP + H(+). Its pathway is cell wall biogenesis; peptidoglycan biosynthesis. Functionally, cell wall formation. Catalyzes the transfer of a GlcNAc subunit on undecaprenyl-pyrophosphoryl-MurNAc-pentapeptide (lipid intermediate I) to form undecaprenyl-pyrophosphoryl-MurNAc-(pentapeptide)GlcNAc (lipid intermediate II). The protein is UDP-N-acetylglucosamine--N-acetylmuramyl-(pentapeptide) pyrophosphoryl-undecaprenol N-acetylglucosamine transferase of Streptococcus suis (strain 98HAH33).